We begin with the raw amino-acid sequence, 143 residues long: Cytochrome c-type biogenesis protein CcmE (143 aa).

The Cytoplasmic portion of the chain corresponds to 1-8 (MTPVRRRK). Residues 9–29 (LFILLFALSVLSAAAALVLYA) form a helical; Signal-anchor for type II membrane protein membrane-spanning segment. The Periplasmic portion of the chain corresponds to 30–143 (LRQNISLFYT…KSALADKVKQ (114 aa)). Heme is bound by residues histidine 124 and tyrosine 128.

This sequence belongs to the CcmE/CycJ family.

It localises to the cell inner membrane. In terms of biological role, heme chaperone required for the biogenesis of c-type cytochromes. Transiently binds heme delivered by CcmC and transfers the heme to apo-cytochromes in a process facilitated by CcmF and CcmH. The chain is Cytochrome c-type biogenesis protein CcmE from Legionella pneumophila (strain Lens).